The chain runs to 258 residues: Aquaglyceroporin (258 aa).

The Cytoplasmic portion of the chain corresponds to 1–16 (MKVTFGNEYIKNFLGE). A helical transmembrane segment spans residues 17–37 (FIGTFVLMFLGEGTTANHFAV). At 38 to 45 (PIKNDWLR) the chain is on the extracellular side. The chain crosses the membrane as a helical span at residues 46–66 (LCIGWGLGVFFGILISAKLSG). Glycerol contacts are provided by A67 and N70. Residues 67 to 87 (AHLNLAVTVGLSTIKKFNYKQ) lie on the Cytoplasmic side of the membrane. Residues 88–108 (IPLYFAGQLLGALSATASVYG) form a helical membrane-spanning segment. The Extracellular portion of the chain corresponds to 109 to 133 (LYYGFVSDQTIPKFSWETGKHANVH). A helical transmembrane segment spans residues 134–154 (IASAFMHEFILTGILLLIILS). The Cytoplasmic portion of the chain corresponds to 155-171 (VTDENICGKFHVLKVSS). Residues 172–192 (IVGLAIICIGISFGGNTGFAL) traverse the membrane as a helical segment. The glycerol site is built by G189, F190, N193, and R196. Over 193–217 (NPSRDLGARILSAIAYGFEAFTRDK) the chain is Extracellular. The chain crosses the membrane as a helical span at residues 218–238 (CYFWIPLIAPIIGSIIFCQIY). The Cytoplasmic segment spans residues 239–258 (DKIVAPLVVISEHDKGALEI).

It belongs to the MIP/aquaporin (TC 1.A.8) family.

It localises to the cell membrane. The catalysed reaction is H2O(in) = H2O(out). It catalyses the reaction glycerol(in) = glycerol(out). It carries out the reaction urea(in) = urea(out). Mediates water and glycerol transport across the cell membrane. Permeable to urea. Required for efficient progression of parasites through the liver stages. The protein is Aquaglyceroporin of Plasmodium berghei (strain Anka).